A 521-amino-acid polypeptide reads, in one-letter code: SET and MYND domain-containing protein DDB_G0292140 (521 aa).

The interval methionine 1–lysine 101 is disordered. The span at threonine 12–threonine 55 shows a compositional bias: low complexity. Residues threonine 56–threonine 65 show a composition bias toward pro residues. The span at proline 66–lysine 90 shows a compositional bias: low complexity. Residues glycine 91–lysine 101 are compositionally biased toward basic residues. An SET domain is found at tryptophan 122–isoleucine 406. The Zn(2+) site is built by cysteine 167, cysteine 170, cysteine 188, cysteine 191, cysteine 197, cysteine 201, histidine 209, and cysteine 213. The MYND-type zinc-finger motif lies at cysteine 167–cysteine 213. The interval glutamine 442–asparagine 521 is disordered. The span at lysine 448–aspartate 469 shows a compositional bias: acidic residues. The segment covering aspartate 470–glycine 485 has biased composition (basic and acidic residues). Residues serine 486–asparagine 495 are compositionally biased toward acidic residues. The span at asparagine 497–histidine 514 shows a compositional bias: low complexity.

The protein belongs to the class V-like SAM-binding methyltransferase superfamily.

Functionally, probable methyltransferase. This Dictyostelium discoideum (Social amoeba) protein is SET and MYND domain-containing protein DDB_G0292140.